A 213-amino-acid polypeptide reads, in one-letter code: Pyridoxine/pyridoxamine 5'-phosphate oxidase (213 aa).

Residues 8–11 (RREY) and Lys67 contribute to the substrate site. FMN-binding positions include 62–67 (RIVLLK), 77–78 (FT), Arg83, Lys84, and Gln106. Residues Tyr124, Arg128, and Ser132 each coordinate substrate. Residues 141-142 (QS) and Trp186 contribute to the FMN site. 192–194 (RLH) is a substrate binding site. FMN is bound at residue Arg196.

This sequence belongs to the pyridoxamine 5'-phosphate oxidase family. As to quaternary structure, homodimer. Requires FMN as cofactor.

It carries out the reaction pyridoxamine 5'-phosphate + O2 + H2O = pyridoxal 5'-phosphate + H2O2 + NH4(+). The catalysed reaction is pyridoxine 5'-phosphate + O2 = pyridoxal 5'-phosphate + H2O2. It functions in the pathway cofactor metabolism; pyridoxal 5'-phosphate salvage; pyridoxal 5'-phosphate from pyridoxamine 5'-phosphate: step 1/1. It participates in cofactor metabolism; pyridoxal 5'-phosphate salvage; pyridoxal 5'-phosphate from pyridoxine 5'-phosphate: step 1/1. In terms of biological role, catalyzes the oxidation of either pyridoxine 5'-phosphate (PNP) or pyridoxamine 5'-phosphate (PMP) into pyridoxal 5'-phosphate (PLP). The chain is Pyridoxine/pyridoxamine 5'-phosphate oxidase from Shewanella sediminis (strain HAW-EB3).